The chain runs to 255 residues: Fe(3+) dicitrate transport ATP-binding protein FecE (255 aa).

The 236-residue stretch at 3–238 (LRTENLTVSY…GLLRTVFSVE (236 aa)) folds into the ABC transporter domain. 35-42 (GPNGCGKS) serves as a coordination point for ATP.

Belongs to the ABC transporter superfamily. As to quaternary structure, the complex is composed of two ATP-binding proteins (FecE), two transmembrane proteins (FecC and FecD) and a solute-binding protein (FecB).

It localises to the cell inner membrane. It catalyses the reaction iron(III) dicitrate(out) + ATP + H2O = iron(III) dicitrate(in) + ADP + phosphate + H(+). Functionally, part of the ABC transporter complex FecBCDE involved in citrate-dependent Fe(3+) uptake. Binds ATP. Probably responsible for energy coupling to the transport system. The polypeptide is Fe(3+) dicitrate transport ATP-binding protein FecE (Escherichia coli (strain K12)).